A 600-amino-acid polypeptide reads, in one-letter code: Integrator complex subunit 11 (600 aa).

6 residues coordinate Zn(2+): H68, H70, D72, H73, H157, and D178. The HXHXDH motif signature appears at 68-73; sequence HFHLDH. Residue E203 is part of the active site. K381 is covalently cross-linked (Glycyl lysine isopeptide (Lys-Gly) (interchain with G-Cter in SUMO)). Zn(2+) is bound at residue H414. Residues K462 and K475 each participate in a glycyl lysine isopeptide (Lys-Gly) (interchain with G-Cter in SUMO) cross-link. The Nuclear localization signal motif lies at 469-479; it reads LLPEAKKPRLL.

This sequence belongs to the metallo-beta-lactamase superfamily. RNA-metabolizing metallo-beta-lactamase-like family. INTS11 subfamily. In terms of assembly, component of the Integrator complex, composed of core subunits INTS1, INTS2, INTS3, INTS4, INTS5, INTS6, INTS7, INTS8, INTS9/RC74, INTS10, INTS11/CPSF3L, INTS12, INTS13, INTS14 and INTS15. The core complex associates with protein phosphatase 2A subunits PPP2CA and PPP2R1A, to form the Integrator-PP2A (INTAC) complex. INTS11 is part of the RNA endonuclease subcomplex, composed of INTS4, INTS9, INTS11 and inositol hexakisphosphate (InsP6). Interacts with WDR73; interaction is required for the assembly of the RNA endonuclease subcomplex in the cytoplasm. Interacts with BRAT1; interaction is required for the assembly of the RNA endonuclease subcomplex and inhibits the endonuclease activity of INTS11 before formation of mature integrator complex. Zn(2+) is required as a cofactor. In terms of processing, sumoylated; sumoylation regulates its subcellular location and is required for integrator complex integrity.

Its subcellular location is the nucleus. The protein localises to the cytoplasm. With respect to regulation, the RNA endonuclease activity is inhibited by BRAT1 that forms hyrogen bond and hydrophobic interactions with the active site. RNA endonuclease component of the integrator complex, a multiprotein complex that terminates RNA polymerase II (Pol II) transcription in the promoter-proximal region of genes. The integrator complex provides a quality checkpoint during transcription elongation by driving premature transcription termination of transcripts that are unfavorably configured for transcriptional elongation: the complex terminates transcription by (1) catalyzing dephosphorylation of the C-terminal domain (CTD) of Pol II subunit POLR2A/RPB1 and SUPT5H/SPT5, (2) degrading the exiting nascent RNA transcript via endonuclease activity and (3) promoting the release of Pol II from bound DNA. The integrator complex is also involved in terminating the synthesis of non-coding Pol II transcripts, such as enhancer RNAs (eRNAs), small nuclear RNAs (snRNAs), telomerase RNAs and long non-coding RNAs (lncRNAs). Within the integrator complex, INTS11 constitutes the RNA endonuclease subunit that degrades exiting nascent RNA transcripts. Mediates recruitment of cytoplasmic dynein to the nuclear envelope, probably as component of the integrator complex. This is Integrator complex subunit 11 (INTS11) from Pongo abelii (Sumatran orangutan).